Reading from the N-terminus, the 197-residue chain is Probable nicotinate-nucleotide adenylyltransferase (197 aa).

The protein belongs to the NadD family.

It carries out the reaction nicotinate beta-D-ribonucleotide + ATP + H(+) = deamido-NAD(+) + diphosphate. The protein operates within cofactor biosynthesis; NAD(+) biosynthesis; deamido-NAD(+) from nicotinate D-ribonucleotide: step 1/1. Its function is as follows. Catalyzes the reversible adenylation of nicotinate mononucleotide (NaMN) to nicotinic acid adenine dinucleotide (NaAD). The protein is Probable nicotinate-nucleotide adenylyltransferase of Bordetella parapertussis (strain 12822 / ATCC BAA-587 / NCTC 13253).